We begin with the raw amino-acid sequence, 379 residues long: UDP-N-acetylglucosamine--N-acetylmuramyl-(pentapeptide) pyrophosphoryl-undecaprenol N-acetylglucosamine transferase (379 aa).

Residues 17–19 (TGG), asparagine 128, arginine 169, serine 197, and glutamine 298 contribute to the UDP-N-acetyl-alpha-D-glucosamine site.

The protein belongs to the glycosyltransferase 28 family. MurG subfamily.

It localises to the cell inner membrane. It catalyses the reaction di-trans,octa-cis-undecaprenyl diphospho-N-acetyl-alpha-D-muramoyl-L-alanyl-D-glutamyl-meso-2,6-diaminopimeloyl-D-alanyl-D-alanine + UDP-N-acetyl-alpha-D-glucosamine = di-trans,octa-cis-undecaprenyl diphospho-[N-acetyl-alpha-D-glucosaminyl-(1-&gt;4)]-N-acetyl-alpha-D-muramoyl-L-alanyl-D-glutamyl-meso-2,6-diaminopimeloyl-D-alanyl-D-alanine + UDP + H(+). It functions in the pathway cell wall biogenesis; peptidoglycan biosynthesis. In terms of biological role, cell wall formation. Catalyzes the transfer of a GlcNAc subunit on undecaprenyl-pyrophosphoryl-MurNAc-pentapeptide (lipid intermediate I) to form undecaprenyl-pyrophosphoryl-MurNAc-(pentapeptide)GlcNAc (lipid intermediate II). The sequence is that of UDP-N-acetylglucosamine--N-acetylmuramyl-(pentapeptide) pyrophosphoryl-undecaprenol N-acetylglucosamine transferase from Brucella melitensis biotype 2 (strain ATCC 23457).